We begin with the raw amino-acid sequence, 574 residues long: Proline--tRNA ligase (574 aa).

This sequence belongs to the class-II aminoacyl-tRNA synthetase family. ProS type 1 subfamily. Homodimer.

It localises to the cytoplasm. It carries out the reaction tRNA(Pro) + L-proline + ATP = L-prolyl-tRNA(Pro) + AMP + diphosphate. Catalyzes the attachment of proline to tRNA(Pro) in a two-step reaction: proline is first activated by ATP to form Pro-AMP and then transferred to the acceptor end of tRNA(Pro). As ProRS can inadvertently accommodate and process non-cognate amino acids such as alanine and cysteine, to avoid such errors it has two additional distinct editing activities against alanine. One activity is designated as 'pretransfer' editing and involves the tRNA(Pro)-independent hydrolysis of activated Ala-AMP. The other activity is designated 'posttransfer' editing and involves deacylation of mischarged Ala-tRNA(Pro). The misacylated Cys-tRNA(Pro) is not edited by ProRS. The protein is Proline--tRNA ligase of Ralstonia pickettii (strain 12J).